Reading from the N-terminus, the 745-residue chain is Gamma-tubulin complex component 4 (745 aa).

The protein belongs to the TUBGCP family. Gamma-tubulin complex is composed of gamma-tubulin and GCP proteins.

It is found in the cytoplasm. Its subcellular location is the cytoskeleton. It localises to the microtubule organizing center. The protein resides in the spindle. Functionally, gamma-tubulin complex is necessary for microtubule nucleation at the microtubule organizing centers (MTOCs). Its function is as follows. Gamma-tubulin complex is essential for the control of microtubular network remodeling in the course of initiation and development of giant-feeding cells, and for the successful reproduction of nematodes (e.g. Meloidogyne spp.) in their plant hosts. This chain is Gamma-tubulin complex component 4 (GCP4), found in Arabidopsis thaliana (Mouse-ear cress).